A 1390-amino-acid polypeptide reads, in one-letter code: DNA-directed RNA polymerase subunit beta (1390 aa).

Residues 556 to 576 (KLADQDAENDPDSDLGTKSSN) are disordered.

It belongs to the RNA polymerase beta chain family. The RNAP catalytic core consists of 2 alpha, 1 beta, 1 beta' and 1 omega subunit. When a sigma factor is associated with the core the holoenzyme is formed, which can initiate transcription.

It catalyses the reaction RNA(n) + a ribonucleoside 5'-triphosphate = RNA(n+1) + diphosphate. DNA-dependent RNA polymerase catalyzes the transcription of DNA into RNA using the four ribonucleoside triphosphates as substrates. This is DNA-directed RNA polymerase subunit beta from Mycoplasmoides gallisepticum (strain R(low / passage 15 / clone 2)) (Mycoplasma gallisepticum).